The primary structure comprises 66 residues: Large ribosomal subunit protein uL29 (66 aa).

It belongs to the universal ribosomal protein uL29 family.

The sequence is that of Large ribosomal subunit protein uL29 from Hydrogenobaculum sp. (strain Y04AAS1).